Consider the following 3230-residue polypeptide: Helicase SRCAP (3230 aa).

The segment at 1–71 (MQSSPSPAHP…GPPDGATVPL (71 aa)) is disordered. The segment covering 26 to 41 (GSNPVSPASSSSPASS) has biased composition (low complexity). In terms of domain architecture, HSA spans 124–196 (LPKVPEPPRP…EQAKLRRIAS (73 aa)). Disordered stretches follow at residues 253-547 (QPLT…EEDD) and 559-581 (EEQS…LGPK). Residues 257–273 (SSKAGSSPCLGSSSAAS) are compositionally biased toward low complexity. A compositionally biased stretch (acidic residues) spans 283-313 (DDEDGDFQPQEDEEEDDEETIEVEEQQEGND). The span at 315 to 329 (EAQRREIELLRREGE) shows a compositional bias: basic and acidic residues. A compositionally biased stretch (low complexity) spans 337–356 (RSLPPQLLEGPSSPSQTPSS). The span at 397-425 (DEDDEEFTANEEEAEDEEDTIAAEEQLEG) shows a compositional bias: acidic residues. Over residues 426-441 (EVDHAMELSELAREGE) the composition is skewed to basic and acidic residues. 3 stretches are compositionally biased toward acidic residues: residues 462 to 490 (SEDE…EPPQ), 503 to 517 (RSED…EEET), and 524 to 533 (EESESEESED). Residues 630 to 795 (VTMYEKKLNG…WSLMHFLMPH (166 aa)) enclose the Helicase ATP-binding domain. An ATP-binding site is contributed by 643 to 650 (DEMGLGKT). Disordered regions lie at residues 1017–1045 (APLG…PQVL), 1058–1125 (PPLI…PGSS), and 1138–1166 (TFPP…TPAP). Pro residues-rich tracts occupy residues 1018–1030 (PLGP…PPGP) and 1058–1076 (PPLI…PPLQ). Positions 1093 to 1107 (LSGTSRPPTPTLSLK) are enriched in low complexity. Over residues 1108-1123 (PTPPAPVRLSPAPPPG) the composition is skewed to pro residues. Over residues 1138–1160 (TFPPAAATTTSTTTATATTTAVP) the composition is skewed to low complexity. A Phosphoserine modification is found at Ser-1172. 4 disordered regions span residues 1320-1366 (GLTP…APMP), 1406-1425 (SLPG…PLAS), 1629-1760 (VPVM…ASPV), and 1839-1893 (SRLP…EEKR). Residues 1323 to 1336 (PVPPLAPAPRPPSS) show a composition bias toward pro residues. Low complexity predominate over residues 1337–1360 (GLPAVLNPRPTLTPGRLPTPTLGT). Residues 1675–1691 (PASTQTLALAPALAPTL) are compositionally biased toward low complexity. Residues 1692–1733 (GGSSPSQTLSLGTGNPQGPFPTQTLSLTPASSLVPTPAQTLS) are compositionally biased toward polar residues. The span at 1750-1760 (PAPPLAPASPV) shows a compositional bias: pro residues. Residues 2044 to 2197 (KLQTLAVLLR…DMAIEGGNFT (154 aa)) form the Helicase C-terminal domain. 6 disordered regions span residues 2214–2233 (LEEP…EETV), 2271–2298 (FNEN…MSRA), 2327–2453 (VSRE…APAA), 2564–2583 (LELA…VPPK), 2598–3081 (KNLS…GRKS), and 3095–3230 (DLAD…KAKT). The span at 2215-2225 (EEPSSSSVPSA) shows a compositional bias: low complexity. Composition is skewed to basic and acidic residues over residues 2284–2298 (EAGR…MSRA), 2327–2358 (VSRE…RLPQ), and 2386–2403 (KAPE…RGAR). A compositionally biased stretch (pro residues) spans 2438–2448 (RPAPRPRPTPA). 2 stretches are compositionally biased toward low complexity: residues 2564 to 2579 (LELA…SLSL) and 2600 to 2611 (LSLTPSAPSLTL). The span at 2669-2679 (EADRTSEELTE) shows a compositional bias: basic and acidic residues. Residues 2694-2712 (VTAEVAAPSTSSSATSSPE) show a composition bias toward low complexity. Residues 2782 to 2794 (SETSASPGSPSVR) show a composition bias toward polar residues. Low complexity predominate over residues 2807–2817 (GPCEAAPSSSL). A compositionally biased stretch (basic residues) spans 2856-2868 (VKRRRGRPPKKNR). Positions 2857 to 2869 (KRRRGRPPKKNRS) form a DNA-binding region, a.T hook 1. Residues 2913–2926 (IPGPQPLGPQPVHR) are compositionally biased toward pro residues. The segment at residues 2936–2948 (KRRRGRPPKARDL) is a DNA-binding region (a.T hook 2). The segment covering 2953–2965 (TISSAGDGNSESR) has biased composition (polar residues). The span at 2967-2982 (QPPPHPSPLTPLPPLL) shows a compositional bias: pro residues. Low complexity predominate over residues 2983–3002 (VCPTATVANTVTTVTISTSP). The a.T hook 3 DNA-binding region spans 3004–3016 (KRKRGRPPKNPPS). The span at 3011-3020 (PKNPPSPRPS) shows a compositional bias: pro residues. Positions 3044 to 3053 (PQGQGESEGS) are enriched in low complexity. Over residues 3168 to 3184 (SVEESEAEASGEEEEGD) the composition is skewed to acidic residues.

This sequence belongs to the SNF2/RAD54 helicase family. SWR1 subfamily. As to quaternary structure, interacts with CREBBP and EP300. May be part of a complex containing SRCAP, CREBBP, CARM1 and GRIP1. Component of the chromatin-remodeling SRCAP complex composed of at least SRCAP, DMAP1, RUVBL1, RUVBL2, ACTL6A, YEATS4, VPS72, ACTR6 and ZNHIT1. Component of a NuA4-related complex which contains EP400, TRRAP/PAF400, SRCAP, BRD8/SMAP, EPC1, DMAP1/DNMAP1, RUVBL1/TIP49, RUVBL2, actin, ACTL6A/BAF53A, VPS72 and YEATS4/GAS41. (Microbial infection) Interacts with hepatitis C virus (HCV) NS5A. In terms of assembly, (Microbial infection) Interacts with human adenovirus 2 DBP.

It is found in the nucleus. Its function is as follows. Catalytic component of the SRCAP complex which mediates the ATP-dependent exchange of histone H2AZ/H2B dimers for nucleosomal H2A/H2B, leading to transcriptional regulation of selected genes by chromatin remodeling. Acts as a coactivator for CREB-mediated transcription, steroid receptor-mediated transcription, and Notch-mediated transcription. In Homo sapiens (Human), this protein is Helicase SRCAP (SRCAP).